The primary structure comprises 199 residues: NAD(P)H-quinone oxidoreductase chain 6 (199 aa).

A run of 5 helical transmembrane segments spans residues 9 to 29 (IVSFAILAAMMIGSAIGVVLL), 32 to 52 (VVYSAFLLGGVFISIAGLYLL), 61 to 81 (AQVLIYVGAVNVLILFAIMLV), 102 to 122 (LVCAGIFALLSAMVLTTPWAI), and 143 to 163 (FLLPFELASILLLMALVGAIV).

Belongs to the complex I subunit 6 family.

It is found in the membrane. The catalysed reaction is a plastoquinone + NADH + (n+1) H(+)(in) = a plastoquinol + NAD(+) + n H(+)(out). It catalyses the reaction a plastoquinone + NADPH + (n+1) H(+)(in) = a plastoquinol + NADP(+) + n H(+)(out). NDH-1 shuttles electrons from NAD(P)H, via FMN and iron-sulfur (Fe-S) centers, to quinones in the respiratory chain. The immediate electron acceptor for the enzyme in this species is believed to be plastoquinone. Couples the redox reaction to proton translocation (for every two electrons transferred, four hydrogen ions are translocated across the cytoplasmic membrane), and thus conserves the redox energy in a proton gradient. This chain is NAD(P)H-quinone oxidoreductase chain 6 (ndhG), found in Leptolyngbya boryana (Plectonema boryanum).